The chain runs to 1010 residues: ATP-dependent DNA/RNA helicase DHX36 (1010 aa).

Residues M1–G54 form a required for recruitment to cytoplasmic stress granules region. The disordered stretch occupies residues M1–R63. The segment at M1–T107 is required for the pre-miR-134 transport. The necessary for nuclear and nucleolar caps localizations stretch occupies residues M1–M202. Over residues R16–G51 the composition is skewed to gly residues. The DSM (DHX36-specific motif) stretch occupies residues H56–K78. The segment at H56–K108 is required for G4-DNA- and G4-RNA-binding. 2 recA-like domain regions span residues N109–I388 and P389–L630. A Helicase ATP-binding domain is found at V219–P389. Residue G235–T240 participates in ATP binding. The tract at residues R267–Q319 is necessary for interaction with single-stranded DNA at the 3'-end of the G4-DNA structure. A DEAH box motif is present at residues D336–H339. The Mg(2+) site is built by E337 and H339. The 171-residue stretch at A479–R649 folds into the Helicase C-terminal domain. The necessary for interaction with single-stranded DNA at the 3'-end of the G4-DNA structure stretch occupies residues W500–S559. Residues D519–M530 carry the Nuclear localization signal motif. ATP is bound by residues S559 and R604–R607. The WH domain stretch occupies residues P631–V700. Necessary for interaction with single-stranded DNA at the 3'-end of the G4-DNA structure regions lie at residues E640 to P699, N851 to Y862, and H872 to Y902. The interval P843–V907 is OB-fold-like subdomains. At K949 the chain carries N6-acetyllysine. S965 carries the phosphoserine modification.

Found in a multi-helicase-TICAM1 complex at least composed of DHX36, DDX1, DDX21 and TICAM1; this complex exists in resting cells with or without dsRNA poly(I:C) ligand stimulation. Interacts (via C-terminus) with TICAM1 (via TIR domain). Interacts (via C-terminus) with DDX21; this interaction serves as bridges to TICAM1. Interacts with TERT; this interaction is dependent on the ability of DHX36 to bind to the G-quadruplex RNA (G4-RNA) structure present in the telomerase RNA template component (TERC). Interacts with DKC1; this interaction is dependent on the ability of DHX36 to bind to the G4-RNA structure present in TERC. Interacts with PARN; this interaction stimulates PARN to enhance uPA mRNA decay. Interacts with EXOSC3; this interaction occurs in a RNase-insensitive manner. Interacts with EXOSC10; this interaction occurs in a RNase-insensitive manner. Interacts with ILF3; this interaction occurs in a RNA-dependent manner. Interacts with ELAVL1; this interaction occurs in an RNA-dependent manner. Interacts with DDX5; this interaction occurs in a RNA-dependent manner. Interacts with DDX17; this interaction occurs in a RNA-dependent manner. Interacts with HDAC1; this interaction occurs in a RNA-dependent manner. Interacts with HDAC3; this interaction occurs in a RNA-dependent manner. Interacts with HDAC4. Interacts with AGO1. Interacts with AGO2. Interacts with ERCC6. Mg(2+) serves as cofactor.

The protein localises to the nucleus. It is found in the cytoplasm. The protein resides in the cytosol. It localises to the stress granule. Its subcellular location is the nucleus speckle. The protein localises to the chromosome. It is found in the telomere. The protein resides in the mitochondrion. It localises to the perikaryon. Its subcellular location is the cell projection. The protein localises to the dendrite. It is found in the axon. The catalysed reaction is ATP + H2O = ADP + phosphate + H(+). Its activity is regulated as follows. ATPase activity is enhanced in the presence of homomeric poly(U) RNAs, but not by double-stranded DNA (dsDNA), double-stranded RNA (dsRNA) and tRNA. Multifunctional ATP-dependent helicase that unwinds G-quadruplex (G4) structures. Plays a role in many biological processes such as genomic integrity, gene expression regulations and as a sensor to initiate antiviral responses. G4 structures correspond to helical structures containing guanine tetrads. Binds with high affinity to and unwinds G4 structures that are formed in nucleic acids (G4-DNA and G4-RNA). Plays a role in genomic integrity. Converts the G4-RNA structure present in telomerase RNA template component (TREC) into a double-stranded RNA to promote P1 helix formation that acts as a template boundary ensuring accurate reverse transcription. Plays a role in transcriptional regulation. Resolves G4-DNA structures in promoters of genes, such as YY1, KIT/c-kit and ALPL and positively regulates their expression. Plays a role in post-transcriptional regulation. Unwinds a G4-RNA structure located in the 3'-UTR polyadenylation site of the pre-mRNA TP53 and stimulates TP53 pre-mRNA 3'-end processing in response to ultraviolet (UV)-induced DNA damage. Binds to the precursor-microRNA-134 (pre-miR-134) terminal loop and regulates its transport into the synapto-dendritic compartment. Involved in the pre-miR-134-dependent inhibition of target gene expression and the control of dendritic spine size. Plays a role in the regulation of cytoplasmic mRNA translation and mRNA stability. Binds to both G4-RNA structures and alternative non-quadruplex-forming sequence within the 3'-UTR of the PITX1 mRNA regulating negatively PITX1 protein expression. Binds to both G4-RNA structure in the 5'-UTR and AU-rich elements (AREs) localized in the 3'-UTR of NKX2-5 mRNA to either stimulate protein translation or induce mRNA decay in an ELAVL1-dependent manner, respectively. Also binds to ARE sequences present in several mRNAs mediating exosome-mediated 3'-5' mRNA degradation. Involved in cytoplasmic urokinase-type plasminogen activator (uPA) mRNA decay. Component of a multi-helicase-TICAM1 complex that acts as a cytoplasmic sensor of viral double-stranded RNA (dsRNA) and plays a role in the activation of a cascade of antiviral responses including the induction of pro-inflammatory cytokines via the adapter molecule TICAM1. Required for the early embryonic development and hematopoiesis. Involved in the regulation of cardioblast differentiation and proliferation during heart development. Involved in spermatogonia differentiation. May play a role in ossification. The protein is ATP-dependent DNA/RNA helicase DHX36 of Bos taurus (Bovine).